Reading from the N-terminus, the 363-residue chain is MIDPFKRFARPGLFLFDAETAHGLSIAGLKTSLMPKCHLPDDPRLAQTVAGLHFPNPLGMAAGYDKNAEVPDELLGLGFGFAEVGTLTPKPQGGNPKPRIFRLVRDEAVINRLGFNNQGHEAAFARLSARASRPGVVGINIGANKDAEDRIADYVTGIRRFYPLASYFTANISSPNTPGLRDLQAKDSLGHLLDAVLAARADEAAKAGRRVPVFLKIAPDLTEEGMDDIAEVVLARDLDGLIVSNTTLSRDGLTDTRQAGEAGGLSGKPLFEKSTAVLARMRHRVGSALPIIGVGGVSSAQTALEKIKAGADLVQLYSCMVYEGPGLPAAIVKGLSQALDRDGIASIAQLRDSRVDYWRALKV.

FMN contacts are provided by residues 62 to 66 (AGYDK) and Thr86. Lys66 is a binding site for substrate. A substrate-binding site is contributed by 111–115 (NRLGF). FMN contacts are provided by Asn140 and Asn171. Residue Asn171 coordinates substrate. Ser174 acts as the Nucleophile in catalysis. Asn176 contributes to the substrate binding site. FMN contacts are provided by Lys216 and Ser244. Residue 245-246 (NT) participates in substrate binding. FMN contacts are provided by residues Gly267, Gly296, and 317–318 (YS).

This sequence belongs to the dihydroorotate dehydrogenase family. Type 2 subfamily. As to quaternary structure, monomer. FMN is required as a cofactor.

It is found in the cell membrane. The enzyme catalyses (S)-dihydroorotate + a quinone = orotate + a quinol. It participates in pyrimidine metabolism; UMP biosynthesis via de novo pathway; orotate from (S)-dihydroorotate (quinone route): step 1/1. Its function is as follows. Catalyzes the conversion of dihydroorotate to orotate with quinone as electron acceptor. This Allorhizobium ampelinum (strain ATCC BAA-846 / DSM 112012 / S4) (Agrobacterium vitis (strain S4)) protein is Dihydroorotate dehydrogenase (quinone).